Reading from the N-terminus, the 154-residue chain is Xanthine-guanine phosphoribosyltransferase (154 aa).

5-phospho-alpha-D-ribose 1-diphosphate contacts are provided by residues 38-39 (RG), Lys71, and 90-98 (DDLVDTGGT). A GMP-binding site is contributed by Lys71. Residue Asp91 participates in Mg(2+) binding. Guanine is bound by residues Asp94 and Ile137. Xanthine-binding residues include Asp94 and Ile137. Residues 94–98 (DTGGT) and 136–137 (WI) each bind GMP.

Belongs to the purine/pyrimidine phosphoribosyltransferase family. XGPT subfamily. As to quaternary structure, homotetramer. Mg(2+) is required as a cofactor.

The protein resides in the cell inner membrane. It carries out the reaction GMP + diphosphate = guanine + 5-phospho-alpha-D-ribose 1-diphosphate. The enzyme catalyses XMP + diphosphate = xanthine + 5-phospho-alpha-D-ribose 1-diphosphate. It catalyses the reaction IMP + diphosphate = hypoxanthine + 5-phospho-alpha-D-ribose 1-diphosphate. It participates in purine metabolism; GMP biosynthesis via salvage pathway; GMP from guanine: step 1/1. It functions in the pathway purine metabolism; XMP biosynthesis via salvage pathway; XMP from xanthine: step 1/1. Its function is as follows. Purine salvage pathway enzyme that catalyzes the transfer of the ribosyl-5-phosphate group from 5-phospho-alpha-D-ribose 1-diphosphate (PRPP) to the N9 position of the 6-oxopurines guanine and xanthine to form the corresponding ribonucleotides GMP (guanosine 5'-monophosphate) and XMP (xanthosine 5'-monophosphate), with the release of PPi. To a lesser extent, also acts on hypoxanthine. In Buchnera aphidicola subsp. Schizaphis graminum (strain Sg), this protein is Xanthine-guanine phosphoribosyltransferase.